The following is a 689-amino-acid chain: Elongation factor G (689 aa).

The tr-type G domain occupies K8–V282. Residues A17–T24, D81–H85, and N135–D138 contribute to the GTP site.

Belongs to the TRAFAC class translation factor GTPase superfamily. Classic translation factor GTPase family. EF-G/EF-2 subfamily.

It localises to the cytoplasm. Its function is as follows. Catalyzes the GTP-dependent ribosomal translocation step during translation elongation. During this step, the ribosome changes from the pre-translocational (PRE) to the post-translocational (POST) state as the newly formed A-site-bound peptidyl-tRNA and P-site-bound deacylated tRNA move to the P and E sites, respectively. Catalyzes the coordinated movement of the two tRNA molecules, the mRNA and conformational changes in the ribosome. In Halothermothrix orenii (strain H 168 / OCM 544 / DSM 9562), this protein is Elongation factor G.